We begin with the raw amino-acid sequence, 41 residues long: Photosystem I reaction center subunit IX (41 aa).

A helical transmembrane segment spans residues 7-27 (YLSTAPVLLTIWLTFTAGFII).

It belongs to the PsaJ family.

The protein resides in the plastid. Its subcellular location is the chloroplast thylakoid membrane. In terms of biological role, may help in the organization of the PsaE and PsaF subunits. The protein is Photosystem I reaction center subunit IX of Phaeodactylum tricornutum (strain CCAP 1055/1).